A 273-amino-acid polypeptide reads, in one-letter code: Transposon Tn7 transposition protein TnsA (273 aa).

Active-site residues include E63 and E73. A DNA-binding region (H-T-H motif) is located at residues 90–108; the sequence is TRQIAIDSGIKHPVIRGVD. The active site involves D114. Positions 114, 130, and 131 each coordinate Mg(2+). The active site involves K132.

In terms of assembly, heteromer with TnsB. Interacts with TnsC (via C-terminus); this interaction allows TnsA to bind donor DNA. Requires Mg(2+) as cofactor. Mn(2+) is required as a cofactor.

Required for Tn7 transposition. Forms the transposase, together with TnsB. TnsA executes the 5'-DNA strand breakage reaction. TnsABC and TnsD promote high-frequency insertion of Tn7 into a specific target site known as att-Tn7 whereas TnsABC and TnsE promote low-frequency insertion into many different sites. The protein is Transposon Tn7 transposition protein TnsA of Escherichia coli.